The chain runs to 68 residues: Conotoxin phi-MiXXVIIB (68 aa).

Residues Met1 to Lys29 form the signal peptide. Positions Glu30–Arg35 are excised as a propeptide. Intrachain disulfides connect Cys38-Cys49, Cys42-Cys51, Cys45-Cys56, and Cys50-Cys61. Position 44 is a 4-hydroxyproline (Pro44).

This sequence belongs to the conotoxin G2 superfamily. 1 family. As to expression, expressed by the venom duct.

The protein resides in the secreted. Its function is as follows. This peptide promotes cell proliferation (EC(50)=17.85 uM) and inhibits apoptosis (EC(50)=2.2 uM). The protein is Conotoxin phi-MiXXVIIB of Conus miles (Soldier cone).